We begin with the raw amino-acid sequence, 75 residues long: UPF0346 protein OB1736 (75 aa).

This sequence belongs to the UPF0346 family.

This chain is UPF0346 protein OB1736, found in Oceanobacillus iheyensis (strain DSM 14371 / CIP 107618 / JCM 11309 / KCTC 3954 / HTE831).